The chain runs to 303 residues: Taste receptor type 2 member 13 (303 aa).

Residues 1 to 7 are Extracellular-facing; it reads MKSALPS. Residues 8-28 traverse the membrane as a helical segment; the sequence is IFTLVIIAEFIIGNLSNGFIV. Residues 29–55 are Cytoplasmic-facing; that stretch reads LINCIDWVSKRELSSVDKLLIILAISR. Residues 56–76 form a helical membrane-spanning segment; sequence IGLIWEILVSWFLALHYLAIF. Over 77-85 the chain is Extracellular; sequence VSGTGLRIM. The chain crosses the membrane as a helical span at residues 86 to 106; it reads IFSWIVSNHFNLWLATILSIF. At 107–128 the chain is on the cytoplasmic side; the sequence is YLLKIASFSSPAFLYLKWRVNK. A helical transmembrane segment spans residues 129-149; the sequence is VILLILLGTLVFLFLNLIQIN. Residues 150-184 are Extracellular-facing; that stretch reads MHIKDWLDRYERNTTWNFSMSDFETFSVSVKFTMT. 2 N-linked (GlcNAc...) asparagine glycosylation sites follow: Asn-162 and Asn-166. The helical transmembrane segment at 185-205 threads the bilayer; the sequence is MFSLTPFTVAFISFLLLIFSL. At 206–232 the chain is on the cytoplasmic side; sequence QKHLQKMQLNYKGHRDPKTKVHTNALK. A helical transmembrane segment spans residues 233–253; it reads IVISFLLFYASFFLCVLXSWI. At 254-261 the chain is on the extracellular side; it reads SELYQNTV. A helical membrane pass occupies residues 262–282; sequence IYMLCETIGVFYPSSHSFLLI. The Cytoplasmic segment spans residues 283 to 303; the sequence is LGNAKLRQAFLLVAAKVWAKR.

The protein belongs to the G-protein coupled receptor T2R family.

Its subcellular location is the membrane. Its function is as follows. Receptor that may play a role in the perception of bitterness and is gustducin-linked. May play a role in sensing the chemical composition of the gastrointestinal content. The activity of this receptor may stimulate alpha gustducin, mediate PLC-beta-2 activation and lead to the gating of TRPM5. This is Taste receptor type 2 member 13 (TAS2R13) from Gorilla gorilla gorilla (Western lowland gorilla).